The chain runs to 566 residues: MGSAGFSVGKFHVEVASRGRECVSGTPECGNRLGSAGFGALCLELRGADPAWGPFAAHGRSRRQGSRFLWLLKILVIILVLGIVGFMFGSMFLQAVFSSPKPELPSPAPGVQKLKLLPEERLRNLFSYDGIWLFPKNQCKCEANKEQGGYNFQDAYGQSDLPAVKARRQAEFEHFQRREGLPRPLPLLVQPNLPFGYPVHGVEVMPLHTVPIPGLQFEGPDAPVYEVTLTASLGTLNTLADVPDSVVQGRGQKQLIISTSDRKLLKFILQHVTYTSTGYQHQKVDIVSLESRSSVAKFPVTIRHPVIPKLYDPGPERKLRNLVTIATKTFLRPHKLMIMLRSIREYYPDLTVIVADDSQKPLEIKDNHVEYYTMPFGKGWFAGRNLAISQVTTKYVLWVDDDFLFNEETKIEVLVDVLEKTELDVVGGSVLGNVFQFKLLLEQSENGACLHKRMGFFQPLDGFPSCVVTSGVVNFFLAHTERLQRVGFDPRLQRVAHSEFFIDGLGTLLVGSCPEVIIGHQSRSPVVDSELAALEKTYNTYRSNTLTRVQFKLALHYFKNHLQCAA.

Residues 1-22 (MGSAGFSVGKFHVEVASRGREC) form an ER exit and post-Golgi subcellular localization region. Over 1-67 (MGSAGFSVGK…HGRSRRQGSR (67 aa)) the chain is Cytoplasmic. The Vesicular targeting motif lies at 9 to 15 (GKFHVEV). The helical; Signal-anchor for type II membrane protein transmembrane segment at 68–88 (FLWLLKILVIILVLGIVGFMF) threads the bilayer. The Lumenal segment spans residues 89–566 (GSMFLQAVFS…YFKNHLQCAA (478 aa)).

Belongs to the glycosyltransferase 2 family. In terms of assembly, homodimer; disulfide-linked. In terms of tissue distribution, widely expressed. Highly expressed in colon and to a lesser extent in kidney, stomach, ileum and rectum.

The protein resides in the golgi apparatus. The protein localises to the trans-Golgi network membrane. It is found in the cytoplasmic vesicle membrane. It catalyses the reaction an N-acetyl-alpha-neuraminyl-(2-&gt;3)-beta-D-galactosyl derivative + UDP-N-acetyl-alpha-D-galactosamine = an N-acetyl-beta-D-galactosaminyl-(1-&gt;4)-[N-acetyl-alpha-neuraminyl-(2-&gt;3)]-beta-D-galactosyl derivative + UDP + H(+). The enzyme catalyses a 3-O-{alpha-Neu5Ac-(2-&gt;3)-beta-D-Gal-(1-&gt;3)-[alpha-Neu5Ac-(2-&gt;6)]-alpha-D-GalNAc}-L-seryl-[protein] + UDP-N-acetyl-alpha-D-galactosamine = a 3-O-{[alpha-Neu5Ac-(2-&gt;3)]-beta-D-GalNAc-(1-&gt;4)-beta-D-Gal-(1-&gt;3)-[alpha-Neu5Ac-(2-&gt;6)]-alpha-D-GalNAc}-L-seryl-[protein] + UDP + H(+). It carries out the reaction a 3-O-{alpha-Neu5Ac-(2-&gt;3)-beta-D-Gal-(1-&gt;3)-[alpha-Neu5Ac-(2-&gt;6)]-alpha-D-GalNAc}-L-threonyl-[protein] + UDP-N-acetyl-alpha-D-galactosamine = a 3-O-{[alpha-Neu5Ac-(2-&gt;3)]-beta-D-GalNAc-(1-&gt;4)-beta-D-Gal-(1-&gt;3)-[alpha-Neu5Ac-(2-&gt;6)]-alpha-D-GalNAc}-L-threonyl-[protein] + UDP + H(+). The catalysed reaction is a neolactoside IV(3)-alpha-NeuAc-nLc4Cer + UDP-N-acetyl-alpha-D-galactosamine = a neolactoside IV(4)-GalNAc,IV(3)-alpha-NeuAc-nLc4Cer + UDP + H(+). It functions in the pathway protein modification; protein glycosylation. The protein operates within glycolipid biosynthesis. Functionally, beta-1,4 N-acetylgalactosaminyltransferase involved in the biosynthesis of Sd(a) histo-blood group antigen. Catalyzes the transfer of N-acetylgalactosamine (GalNAc) group in a beta-1,4-linkage from UDP-GalNAc to the galactose residue of NeuAcalpha2-&gt;3Gal-R to form Sd(a) glycan epitope GalNAcbeta1-&gt;4(NeuAcalpha2-&gt;3)Gal-R. The Sd(a) epitope is carried in O- and N-linked glycoproteins and glycolipids, including O-linked core 1 structures on GYPA/glycophorin, SLC4A1 and SLC29A1 in erythrocytes, N-linked glycans attached to the Tamm-Horsfall glycoprotein UMOD/uromodulin in renal fluids, O-linked core 3 glycans on mucins in colon and neolactosides in gastric mucosa. Confers protection against influenza A virus strains that attach to NeuAcalpha2-&gt;3-carrying host receptors. Modifies N-glycan chains on host receptors and prevents virus entry into cells. This is Beta-1,4 N-acetylgalactosaminyltransferase 2 from Homo sapiens (Human).